A 340-amino-acid polypeptide reads, in one-letter code: Solute carrier family 35 member G3 (340 aa).

Residues 11-33 are disordered; sequence PDFTQPSPPSTPASLPSKHHHRC. 9 helical membrane-spanning segments follow: residues 39 to 59, 69 to 89, 107 to 127, 160 to 180, 189 to 209, 223 to 243, 257 to 277, 283 to 303, and 307 to 327; these read TKGLFVALLGGGLSAGFVGPF, LPSLELLIFRCLFHLPIALLL, FLHAILNVLSIGCAYSAVQVV, AWCGLFGSTLGLIIIVGPGLG, LYTALGYVLAFLGGLALSLGL, TVAFLFGLVGLMVSVPGLFVL, CVVAVGLLALVSFVCVSYAVT, LVCAVLHSEVVVALMLQYYVL, and VAPSDIMGAGVVLGSIAIITA. The EamA 1 domain maps to 51-176; sequence LSAGFVGPFS…STLGLIIIVG (126 aa). One can recognise an EamA 2 domain in the interval 274–327; the sequence is YAVTKAHPALVCAVLHSEVVVALMLQYYVLYETVAPSDIMGAGVVLGSIAIITA.

This sequence belongs to the SLC35G solute transporter family.

The protein resides in the membrane. This is Solute carrier family 35 member G3 (Slc35g3) from Mus musculus (Mouse).